A 112-amino-acid chain; its full sequence is MKKVLFLLLACTAVAFAAETNAPVEQEAINVWIKAFSVLAAGLGLGVAALGGAIGMGNTAAATIAGTARNPGLGPKLMTTMFIALAMIEAQVIYALVIALIALYANPFIVLQ.

Helical transmembrane passes span 36–56 and 81–101; these read FSVL…AIGM and MFIA…IALI.

It belongs to the ATPase C chain family. As to quaternary structure, F-type ATPases have 2 components, F(1) - the catalytic core - and F(0) - the membrane proton channel. F(1) has five subunits: alpha(3), beta(3), gamma(1), delta(1), epsilon(1). F(0) has three main subunits: a(1), b(2) and c(10-14). The alpha and beta chains form an alternating ring which encloses part of the gamma chain. F(1) is attached to F(0) by a central stalk formed by the gamma and epsilon chains, while a peripheral stalk is formed by the delta and b chains.

The protein resides in the cell inner membrane. Its function is as follows. F(1)F(0) ATP synthase produces ATP from ADP in the presence of a proton or sodium gradient. F-type ATPases consist of two structural domains, F(1) containing the extramembraneous catalytic core and F(0) containing the membrane proton channel, linked together by a central stalk and a peripheral stalk. During catalysis, ATP synthesis in the catalytic domain of F(1) is coupled via a rotary mechanism of the central stalk subunits to proton translocation. In Campylobacter jejuni subsp. jejuni serotype O:2 (strain ATCC 700819 / NCTC 11168), this protein is ATP synthase subunit c.